Reading from the N-terminus, the 383-residue chain is tRNA(Met) cytidine acetate ligase (383 aa).

ATP contacts are provided by residues 7–20 (ITEYNPLHNGHRYH), G101, N150, and R175.

The protein belongs to the TmcAL family.

The protein localises to the cytoplasm. It catalyses the reaction cytidine(34) in elongator tRNA(Met) + acetate + ATP = N(4)-acetylcytidine(34) in elongator tRNA(Met) + AMP + diphosphate. In terms of biological role, catalyzes the formation of N(4)-acetylcytidine (ac(4)C) at the wobble position of elongator tRNA(Met), using acetate and ATP as substrates. First activates an acetate ion to form acetyladenylate (Ac-AMP) and then transfers the acetyl group to tRNA to form ac(4)C34. This chain is tRNA(Met) cytidine acetate ligase, found in Lactiplantibacillus plantarum (strain ATCC BAA-793 / NCIMB 8826 / WCFS1) (Lactobacillus plantarum).